Reading from the N-terminus, the 76-residue chain is UPF0291 protein MW2494 (76 aa).

It belongs to the UPF0291 family.

It localises to the cytoplasm. The chain is UPF0291 protein MW2494 from Staphylococcus aureus (strain MW2).